The chain runs to 206 residues: RNA-binding protein with multiple splicing 2 (206 aa).

At S2 the chain carries N-acetylserine. The RRM domain maps to 25–102 (RTLFVSGLPV…QTLRLEFAKA (78 aa)). Residues 35 to 45 (DIKPRELYLLF) form an important for homodimerization region.

In terms of assembly, homodimer. Interacts with EEF2.

It localises to the cytoplasm. Its subcellular location is the nucleus. The protein resides in the stress granule. In terms of biological role, RNA-binding protein involved in the regulation of smooth muscle cell differentiation and proliferation in the gastrointestinal system. Binds NOG mRNA, the major inhibitor of the bone morphogenetic protein (BMP) pathway. Mediates an increase of NOG mRNA levels, thereby contributing to the negative regulation of BMP signaling pathway and promoting reversible dedifferentiation and proliferation of smooth muscle cells. Acts as a pre-mRNA alternative splicing regulator. Mediates ACTN1 and FLNB alternative splicing. Likely binds to mRNA tandem CAC trinucleotide or CA dinucleotide motifs. This chain is RNA-binding protein with multiple splicing 2 (Rbpms2), found in Mus musculus (Mouse).